Reading from the N-terminus, the 328-residue chain is Thiamine-monophosphate kinase (328 aa).

Residues aspartate 30, threonine 45, threonine 46, and aspartate 47 each coordinate Mg(2+). Position 54 (histidine 54) interacts with substrate. Mg(2+) is bound by residues aspartate 75 and aspartate 122. ATP is bound by residues 121–122 (GD) and arginine 146. Residue aspartate 211 participates in Mg(2+) binding. Serine 213 serves as a coordination point for ATP. A Mg(2+)-binding site is contributed by aspartate 214. Substrate contacts are provided by glutamate 262 and phenylalanine 321.

Belongs to the thiamine-monophosphate kinase family.

The catalysed reaction is thiamine phosphate + ATP = thiamine diphosphate + ADP. Its pathway is cofactor biosynthesis; thiamine diphosphate biosynthesis; thiamine diphosphate from thiamine phosphate: step 1/1. Functionally, catalyzes the ATP-dependent phosphorylation of thiamine-monophosphate (TMP) to form thiamine-pyrophosphate (TPP), the active form of vitamin B1. This chain is Thiamine-monophosphate kinase, found in Haemophilus influenzae (strain ATCC 51907 / DSM 11121 / KW20 / Rd).